Consider the following 622-residue polypeptide: Basal cell adhesion molecule (622 aa).

Residues 1-25 (MEPPDARAGLLWLTFLLSGYSGAQA) form the signal peptide. 2 Ig-like V-type domains span residues 26–135 (ELHV…SSVR) and 140–250 (PEDT…HTFR). Residues 26–541 (ELHVSVPPRV…GSVAPQTAQA (516 aa)) are Extracellular-facing. Intrachain disulfides connect C47–C118, C165–C230, and C284–C330. 3 consecutive Ig-like C2-type domains span residues 267 to 342 (PSTT…EEVQ), 356 to 435 (PLEL…QSFQ), and 442 to 532 (PELK…FHFG). N314, N323, N370, and N377 each carry an N-linked (GlcNAc...) asparagine glycan. Intrachain disulfides connect C378–C418 and C467–C516. Residues 542–562 (GVAVMAVAVSVGLLLLVVAAF) traverse the membrane as a helical segment. Residues 563–622 (YCMRRKGRPGCCRRAEKGAPPAREPELSHSGSERPEHTGLLMGGPSGGGRGGSGGFGDEC) lie on the Cytoplasmic side of the membrane. The disordered stretch occupies residues 574–622 (CRRAEKGAPPAREPELSHSGSERPEHTGLLMGGPSGGGRGGSGGFGDEC). The span at 575-599 (RRAEKGAPPAREPELSHSGSERPEH) shows a compositional bias: basic and acidic residues. Phosphoserine is present on residues S590, S592, S594, and S615. Gly residues predominate over residues 603–622 (LMGGPSGGGRGGSGGFGDEC).

Homodimer. Interacts with ITGA4:ITGB1. Interacts with spectrins SPTA1 and SPTB1. In terms of processing, epinephrine-stimulated phosphorylation of Ser-615 by PKA enhances adhesion to laminin. Ser-615 can also be phosphorylated by AKT1.

Its subcellular location is the cell membrane. Transmembrane glycoprotein that functions as both a receptor and an adhesion molecule playing a crucial role in cell adhesion, motility, migration and invasion. Extracellular domain enables binding to extracellular matrix proteins, such as laminin, integrin and other ligands while its intracellular domain interacts with cytoskeletal proteins like hemoglobin, facilitating cell signal transduction. Serves as a receptor for laminin alpha-5/LAMA5 to promote cell adhesion. Mechanistically, JAK2 induces BCAM phosphorylation and activates its adhesion to laminin by stimulating a Rap1/AKT signaling pathway in the absence of EPOR. The polypeptide is Basal cell adhesion molecule (Bcam) (Mus musculus (Mouse)).